The following is a 59-amino-acid chain: Potassium channel toxin alpha-KTx 16.7 (59 aa).

The first 22 residues, 1 to 22, serve as a signal peptide directing secretion; it reads MKILSILLIALVICSISICTEA. 3 cysteine pairs are disulfide-bonded: cysteine 30-cysteine 51, cysteine 36-cysteine 56, and cysteine 40-cysteine 58.

The protein belongs to the short scorpion toxin superfamily. Potassium channel inhibitor family. Alpha-KTx 16 subfamily. Expressed by the venom gland.

Its subcellular location is the secreted. May play a role in blocking voltage-gated potassium channels Kv1.2/KCNA2, and Kv1.3/KCNA3. Blocks the voltage-gated potassium channel Kv1.3/KCNA3, with an IC(50) of 118.3 +-55.8 nM. The sequence is that of Potassium channel toxin alpha-KTx 16.7 from Mesobuthus gibbosus (Mediterranean checkered scorpion).